The sequence spans 817 residues: MANSNTYLTTPTKTPSSRRNQQSQSKMQSHSKDPINAESRSRFEAYNRLQAAAVAFGEKLPIPEIVAIGGQSDGKSSLLEALLGFRFNVREVEMGTRRPLILQMVHDLSALEPRCRFQDEDSEEYGSPIVSATAVADVIRSRTEALLKKTKTAVSPKPIVMRAEYAHCPNLTIIDTPGFVLKAKKGEPETTPDEILSMVKSLASPPHRILLFLQQSSVEWCSSLWLDAVREIDSSFRRTIVVVSKFDNRLKEFSDRGEVDRYLSASGYLGENTRPYFVALPKDRSTISNDEFRRQISQVDTEVIRHLREGVKGGFDEEKFRSCIGFGSLRDFLESELQKRYKEAAPATLALLEERCSEVTDDMLRMDMKIQATSDVAHLRKAAMLYTASISNHVGALIDGAANPAPEQWGKTTEEERGESGIGSWPGVSVDIKPPNAVLKLYGGAAFERVIHEFRCAAYSIECPPVSREKVANILLAHAGRGGGRGVTEASAEIARTAARSWLAPLLDTACDRLAFVLGSLFEIALERNLNQNSEYEKKTENMDGYVGFHAAVRNCYSRFVKNLAKQCKQLVRHHLDSVTSPYSMACYENNYHQGGAFGAYNKFNQASPNSFCFELSDTSRDEPMKDQENIPPEKNNGQETTPGKGGESHITVPETPSPDQPCEIVYGLVKKEIGNGPDGVGARKRMARMVGNRNIEPFRVQNGGLMFANADNGMKSSSAYSEICSSAAQHFARIREVLVERSVTSTLNSGFLTPCRDRLVVALGLDLFAVNDDKFMDMFVAPGAIVVLQNERQQLQKRQKILQSCLTEFKTVARSL.

The segment covering 1-20 (MANSNTYLTTPTKTPSSRRN) has biased composition (polar residues). The interval 1-37 (MANSNTYLTTPTKTPSSRRNQQSQSKMQSHSKDPINA) is disordered. The Dynamin-type G domain occupies 59 to 346 (KLPIPEIVAI…LQKRYKEAAP (288 aa)). A G1 motif region spans residues 69-76 (GGQSDGKS). 69-76 (GGQSDGKS) contributes to the GTP binding site. The segment at 95-97 (GTR) is G2 motif. The interval 175–178 (DTPG) is G3 motif. Residues 175–179 (DTPGF) and 244–247 (SKFD) each bind GTP. The G4 motif stretch occupies residues 244 to 247 (SKFD). The tract at residues 280–283 (LPKD) is G5 motif. Disordered regions lie at residues 405–425 (APEQ…IGSW) and 616–658 (LSDT…ETPS). Positions 618-629 (DTSRDEPMKDQE) are enriched in basic and acidic residues.

Belongs to the TRAFAC class dynamin-like GTPase superfamily. Dynamin/Fzo/YdjA family. In terms of tissue distribution, expressed in root and leaf meristems.

The protein localises to the cytoplasm. It localises to the cytoskeleton. The protein resides in the phragmoplast. Functionally, probable microtubule-associated force-producing protein that is targeted to the forming cell plate during cytokinesis. May play a role in cell division. The chain is Dynamin-related protein 5A (DRP5A) from Arabidopsis thaliana (Mouse-ear cress).